The primary structure comprises 3117 residues: Centrosome-associated protein 350 (3117 aa).

Residues 1 to 24 (MRSSKSKEVPLPNPRNSQSKDTVQ) form a disordered region. Polar residues predominate over residues 14-24 (PRNSQSKDTVQ). A phosphoserine mark is found at Ser-86, Ser-139, Ser-142, and Ser-218. 4 disordered regions span residues 249 to 275 (PKAL…ILKR), 436 to 514 (ILGP…NKQE), 548 to 625 (TVEL…TEQK), and 671 to 722 (LEEP…PPQP). Residues 255–267 (TDSSPSSTSTSNS) are compositionally biased toward low complexity. The span at 469–501 (GRAESDPRLDVLHRHLQRNSERSRSKSRSENNI) shows a compositional bias: basic and acidic residues. Ser-473 and Ser-507 each carry phosphoserine. Residues 563–573 (PRSHSPVKRKP) are compositionally biased toward basic residues. 2 stretches are compositionally biased toward basic and acidic residues: residues 591 to 625 (YDTD…TEQK) and 694 to 703 (ESDKENKVQE). A coiled-coil region spans residues 598–645 (QYIVRQQEERKRKQNEEKKAQKEATEQKNKRLQELYRKQKEAFTKVKN). At Ser-695 the chain carries Phosphoserine. A compositionally biased stretch (low complexity) spans 705–718 (PPSASSSSDMSLSE). Thr-878 carries the post-translational modification Phosphothreonine. Ser-939 carries the post-translational modification Phosphoserine. The segment covering 981-992 (SVSEGPLLSEGS) has biased composition (low complexity). Residues 981-1002 (SVSEGPLLSEGSLSEEEGDQDG) are disordered. Ser-1061 carries the post-translational modification Phosphoserine. The disordered stretch occupies residues 1081 to 1298 (EDKLDRGTST…GFKPNAPLTD (218 aa)). Residues 1087–1102 (GTSTSRPLNATATPLS) are compositionally biased toward polar residues. Basic and acidic residues predominate over residues 1135-1144 (QEDHSNRKSA). 2 stretches are compositionally biased toward low complexity: residues 1153–1172 (TSQH…STSS) and 1251–1267 (QKTP…KSLQ). Residue Thr-1253 is modified to Phosphothreonine. A phosphoserine mark is found at Ser-1256 and Ser-1259. The span at 1272 to 1283 (GTSSERSKSSVM) shows a compositional bias: polar residues. A coiled-coil region spans residues 1369-1411 (IKAQQQRHERDLALLKLKAEQEALESQRQLEETRNKAAQVHAE). Disordered stretches follow at residues 1494–1674 (TRTE…GGQD) and 1794–1854 (KLKS…SRMD). A compositionally biased stretch (polar residues) spans 1503–1512 (PSVSLSQSKE). Composition is skewed to low complexity over residues 1522-1535 (YSAS…SSGY) and 1543-1556 (SSGS…SVPS). A compositionally biased stretch (basic and acidic residues) spans 1558–1571 (KENEKKLNGEKIES). Ser-1613 carries the post-translational modification Phosphoserine. Over residues 1631–1647 (ESHRRFNMEKRRGHHDD) the composition is skewed to basic and acidic residues. Phosphoserine is present on residues Ser-1648 and Ser-1653. A coiled-coil region spans residues 1707–1800 (KALKEKTKAE…LQEKLKSAGE (94 aa)). A compositionally biased stretch (basic and acidic residues) spans 1794-1815 (KLKSAGESKLDSHSDDDTKDNK). Ser-1818 carries the phosphoserine modification. Residues 1827 to 1841 (RSPSPISISSSETSS) show a composition bias toward low complexity. The stretch at 1856–1899 (KFLTKREQKLMQRRQHAEELLEWKRRLDAEEAEIRQMEKQALAA) forms a coiled coil. Residues 1903–1925 (ELIKPKTPKKELEDQRTEQKEIA) are compositionally biased toward basic and acidic residues. Disordered stretches follow at residues 1903-2020 (ELIK…QCHL), 2107-2221 (ELSQ…ESGD), 2329-2356 (LKER…QKNT), and 2407-2432 (KDSQ…FGSN). A Phosphoserine modification is found at Ser-1936. Over residues 1983–2005 (ELESSTSPSKHSLPKSCTSVSKQ) the composition is skewed to polar residues. Positions 2051–2110 (EGRIRALKDELRKRKSVVNQLKKEQKKRQKERLKAQEASLIKQLESYDEFIKKTEAELSQ) form a coiled coil. The segment covering 2111-2129 (DLETSPTAKPQIKTLSSAS) has biased composition (polar residues). Ser-2115 carries the phosphoserine modification. The span at 2141 to 2170 (HRSETAKNWKSLTESERSRGSLESIAEHVD) shows a compositional bias: basic and acidic residues. Residues 2173–2184 (LSGSERSVSERS) are compositionally biased toward polar residues. A compositionally biased stretch (basic and acidic residues) spans 2191-2201 (RVNEWDSRTED). Thr-2204 is modified (phosphothreonine). A Phosphoserine modification is found at Ser-2206. Basic and acidic residues-rich tracts occupy residues 2329-2338 (LKERQSDQDM) and 2407-2417 (KDSQSCRDKPQ). The segment covering 2419-2432 (MRSSTSGATSFGSN) has biased composition (polar residues). Residues Ser-2431 and Ser-2460 each carry the phosphoserine modification. The segment covering 2465–2478 (MKSKERSDVEHEQQ) has biased composition (basic and acidic residues). Residues 2465 to 2485 (MKSKERSDVEHEQQVTESPSL) form a disordered region. A CAP-Gly domain is found at 2517–2559 (GETSFAKGFWAGVELDKPEGNNNGTYDGIAYFECKEKHGIFAP). Thr-2689 carries the phosphothreonine modification. The stretch at 2719–2752 (LLDLLTREKNQLEAQLKSSLNEEKKSKQQLEKIS) forms a coiled coil. Ser-2830 and Ser-2839 each carry phosphoserine.

In terms of assembly, part of a ternary complex that contains CEP350, CEP43 and MAPRE1. Interacts (via C-terminus) directly with CEP43 (via N-terminus). Interacts with NR1H3, PPARA, PPARD and PPARG. Interacts directly with microtubules. Interacts with the fusion protein CEP43-FGFR1, and by doing so recruits and activates PI3K and PLC-gamma. Interacts with CYLD. Interacts with CFAP157. Interacts with CEP19 (via C-terminus). Interacts with CEP78; promoting CEP78 localization to centrosome and centriole. Phosphorylated during mitosis. As to expression, detected in heart, brain, skeletal muscle, testis, placenta, lung, liver, kidney and pancreas.

Its subcellular location is the cytoplasm. It is found in the cytoskeleton. It localises to the microtubule organizing center. The protein localises to the centrosome. The protein resides in the spindle. Its subcellular location is the nucleus. It is found in the centriole. It localises to the cilium basal body. Functionally, plays an essential role in centriole growth by stabilizing a procentriolar seed composed of at least, SASS6 and CPAP. Required for anchoring microtubules to the centrosomes and for the integrity of the microtubule network. Recruits PPARA to discrete subcellular compartments and thereby modulates PPARA activity. Required for ciliation. This Homo sapiens (Human) protein is Centrosome-associated protein 350.